Reading from the N-terminus, the 210-residue chain is Probable GTP-binding protein EngB (210 aa).

The EngB-type G domain occupies 25 to 199 (TGIEVAFAGR…RQKLDSWFNE (175 aa)). Residues 33–40 (GRSNAGKS), 60–64 (GRTQL), 78–81 (DLPG), 145–148 (TKAD), and 178–180 (FSS) each bind GTP. Residues serine 40 and threonine 62 each contribute to the Mg(2+) site.

The protein belongs to the TRAFAC class TrmE-Era-EngA-EngB-Septin-like GTPase superfamily. EngB GTPase family. Requires Mg(2+) as cofactor.

Necessary for normal cell division and for the maintenance of normal septation. This Klebsiella pneumoniae subsp. pneumoniae (strain ATCC 700721 / MGH 78578) protein is Probable GTP-binding protein EngB.